A 246-amino-acid chain; its full sequence is Probable transcriptional regulatory protein GK2594 (246 aa).

Belongs to the TACO1 family.

It is found in the cytoplasm. The protein is Probable transcriptional regulatory protein GK2594 of Geobacillus kaustophilus (strain HTA426).